The following is a 380-amino-acid chain: Acyl-lipid (9+3)-(E)-desaturase (380 aa).

The segment at 1–25 (MGAGGCISVSETKPNQKNSLERAPY) is disordered. The segment covering 9 to 18 (VSETKPNQKN) has biased composition (polar residues). The next 2 membrane-spanning stretches (helical) occupy residues 52-72 (LSYV…TTYF) and 81-101 (ALAW…VWVI). The Histidine box-1 motif lies at 103–107 (HECGH). The short motif at 139–143 (HRRHH) is the Histidine box-2 element. Transmembrane regions (helical) follow at residues 177–197 (IGVL…FNVS), 223–243 (IYLS…AAMV), and 247–267 (VWLI…LVLV). Positions 313-317 (HIVHH) match the Histidine box-3 motif.

This sequence belongs to the fatty acid desaturase type 1 family.

It is found in the membrane. The enzyme catalyses a (9Z)-octadecenoyl-containing glycerolipid + 2 Fe(II)-[cytochrome b5] + O2 + 2 H(+) = a (9Z,12E)-octadecadienoyl-containing glycerolipid + 2 Fe(III)-[cytochrome b5] + 2 H2O. It catalyses the reaction a (9Z)-hexadecenoyl-containing glycerolipid + 2 Fe(II)-[cytochrome b5] + O2 + 2 H(+) = a (9Z,12E)-hexadecadienoyl-containing glycerolipid + 2 Fe(III)-[cytochrome b5] + 2 H2O. Its function is as follows. Involved in the biosynthesis of dimorphecolic acid (9-OH-18:2(10E,12E)). Converts oleic acid (18:1(9Z)) into 18:2(9Z,12E) and probably palmitoleic acid (16:1(9Z)) into 16:2(9Z,12E). Very limited ability to catalyze (Z)-delta(12) desaturation. This Dimorphotheca sinuata (African daisy) protein is Acyl-lipid (9+3)-(E)-desaturase.